The chain runs to 267 residues: Very long chain fatty acid elongase 6 (267 aa).

N2 carries N-linked (GlcNAc...) asparagine glycosylation. The next 7 membrane-spanning stretches (helical) occupy residues 34–51 (FLFS…RHLM), 70–90 (LAVF…YILM), 111–131 (FWAY…IFII), 136–156 (KLIF…WYSY), 159–179 (MVAG…VMYS), 197–217 (FITL…YLVF), and 234–254 (IFWS…FFFE).

Belongs to the ELO family. ELOVL6 subfamily. Post-translationally, N-Glycosylated. As to expression, highly expressed in adrenal gland, liver, white adipose tissue (WAT), adult and fetal brain, cerebellum, spinal cord, testis, skin and peripheral nerve; where lipogenesis and steroidogenesis are active. Weakly expressed in kidney, heart, skeletal muscle, lung, and spleen.

Its subcellular location is the endoplasmic reticulum membrane. It catalyses the reaction a very-long-chain acyl-CoA + malonyl-CoA + H(+) = a very-long-chain 3-oxoacyl-CoA + CO2 + CoA. The enzyme catalyses hexadecanoyl-CoA + malonyl-CoA + H(+) = 3-oxooctadecanoyl-CoA + CO2 + CoA. It carries out the reaction (9Z)-hexadecenoyl-CoA + malonyl-CoA + H(+) = 3-oxo-(11Z)-octadecenoyl-CoA + CO2 + CoA. The catalysed reaction is dodecanoyl-CoA + malonyl-CoA + H(+) = 3-oxotetradecanoyl-CoA + CO2 + CoA. It catalyses the reaction tetradecanoyl-CoA + malonyl-CoA + H(+) = 3-oxohexadecanoyl-CoA + CO2 + CoA. The enzyme catalyses (9Z)-octadecenoyl-CoA + malonyl-CoA + H(+) = 3-oxo-(11Z)-eicosenoyl-CoA + CO2 + CoA. It carries out the reaction (9Z,12Z)-octadecadienoyl-CoA + malonyl-CoA + H(+) = (11Z,14Z)-3-oxoicosa-11,14-dienoyl-CoA + CO2 + CoA. The catalysed reaction is (9Z,12Z,15Z)-octadecatrienoyl-CoA + malonyl-CoA + H(+) = (11Z,14Z,17Z)-3-oxoeicosatrienoyl-CoA + CO2 + CoA. It participates in lipid metabolism; fatty acid biosynthesis. Its activity is regulated as follows. The reaction is stimulated by the presence of HSD17B12, the enzyme catalyzing the second step of the elongation cycle. Functionally, catalyzes the first and rate-limiting reaction of the four reactions that constitute the long-chain fatty acids elongation cycle. This endoplasmic reticulum-bound enzymatic process allows the addition of 2 carbons to the chain of long- and very long-chain fatty acids (VLCFAs) per cycle. Condensing enzyme that elongates fatty acids with 12, 14 and 16 carbons with higher activity toward C16:0 acyl-CoAs. Catalyzes the synthesis of unsaturated C16 long chain fatty acids and, to a lesser extent, C18:0 and those with low desaturation degree. May participate in the production of saturated and monounsaturated VLCFAs of different chain lengths that are involved in multiple biological processes as precursors of membrane lipids and lipid mediators. This Mus musculus (Mouse) protein is Very long chain fatty acid elongase 6.